A 92-amino-acid chain; its full sequence is Phospholemman (92 aa).

Positions 1-20 are cleaved as a signal peptide; that stretch reads MASLSHILVLCVGLLAMVNA. Residues 21–35 lie on the Extracellular side of the membrane; the sequence is EAPQEHDPFTYDYQS. The helical transmembrane segment at 36–56 threads the bilayer; sequence LRIGGLIIAGILFILGILIVL. Topologically, residues 57-92 are cytoplasmic; the sequence is SRRCRCKFNQQQRTGEPDEEEGTFRSSIRRLSTRRR. The S-palmitoyl cysteine moiety is linked to residue Cys-60. Position 62 is an S-glutathionyl cysteine; alternate (Cys-62). The S-palmitoyl cysteine; alternate moiety is linked to residue Cys-62. The tract at residues 65-92 is disordered; that stretch reads NQQQRTGEPDEEEGTFRSSIRRLSTRRR. Phosphothreonine is present on Thr-79. Ser-82 is subject to Phosphoserine. Ser-83 is modified (phosphoserine; by PKA and PKC). Residues 83-92 are compositionally biased toward basic residues; it reads SIRRLSTRRR. At Ser-88 the chain carries Phosphoserine; by PKA. At Thr-89 the chain carries Phosphothreonine; by PKC.

This sequence belongs to the FXYD family. In terms of assembly, homotetramer. Monomer. Regulatory subunit of the sodium/potassium-transporting ATPase (NKA) which is composed of a catalytic alpha subunit, an auxiliary non-catalytic beta subunit and an additional regulatory subunit. The monomeric form associates with NKA while the oligomeric form does not. Interacts with the catalytic alpha-1 subunit ATP1A1. Also interacts with the catalytic alpha-2 and alpha-3 subunits ATP1A2 and ATP1A3. Very little interaction with ATP1A1, ATP1A2 or ATP1A3 when phosphorylated at Ser-83. Interacts with the non-catalytic beta-1 subunit ATP1B1. Oxidative stress decreases interaction with ATP1A1 but increases interaction with ATP1B1. Major plasma membrane substrate for cAMP-dependent protein kinase (PKA) and protein kinase C (PKC) in several different tissues. Phosphorylated in response to insulin and adrenergic stimulation. Phosphorylation at Ser-88 stimulates sodium/potassium-transporting ATPase activity while the unphosphorylated form inhibits sodium/potassium-transporting ATPase activity. Phosphorylation increases tetramerization, decreases binding to ATP1A1 and reduces inhibition of ATP1A1 activity. Phosphorylation at Ser-83 leads to greatly reduced interaction with ATP1A1, ATP1A2 and ATP1A3. May be phosphorylated by DMPK. In terms of processing, palmitoylation increases half-life and stability and is enhanced upon phosphorylation at Ser-88 by PKA. In terms of tissue distribution, in the brain, detected in cerebellum and choroid plexus (at protein level).

It is found in the cell membrane. It localises to the sarcolemma. The protein resides in the apical cell membrane. The protein localises to the membrane. Its subcellular location is the caveola. It is found in the T-tubule. Its function is as follows. Associates with and regulates the activity of the sodium/potassium-transporting ATPase (NKA) which transports Na(+) out of the cell and K(+) into the cell. Inhibits NKA activity in its unphosphorylated state and stimulates activity when phosphorylated. Reduces glutathionylation of the NKA beta-1 subunit ATP1B1, thus reversing glutathionylation-mediated inhibition of ATP1B1. Contributes to female sexual development by maintaining the excitability of neurons which secrete gonadotropin-releasing hormone. The chain is Phospholemman from Bos taurus (Bovine).